Here is a 306-residue protein sequence, read N- to C-terminus: Protein FAM228A (306 aa).

Positions H237–V277 are disordered. Position 270 is a phosphoserine (S270).

This sequence belongs to the FAM228 family.

The protein is Protein FAM228A (Fam228a) of Rattus norvegicus (Rat).